A 418-amino-acid chain; its full sequence is Serpin A3-8 (418 aa).

The first 25 residues, Met-1 to Cys-25, serve as a signal peptide directing secretion. N-linked (GlcNAc...) asparagine glycans are attached at residues Asn-103, Asn-183, Asn-233, and Asn-268.

Belongs to the serpin family. Homodimer.

Its subcellular location is the cytoplasmic vesicle. It is found in the secretory vesicle. The protein resides in the chromaffin granule. It localises to the secreted. In terms of biological role, serine protease inhibitor. In Bos taurus (Bovine), this protein is Serpin A3-8.